Consider the following 223-residue polypeptide: RNA-free ribonuclease P (223 aa).

It belongs to the HARP family.

The catalysed reaction is Endonucleolytic cleavage of RNA, removing 5'-extranucleotides from tRNA precursor.. RNA-free RNase P that catalyzes the removal of the 5'-leader sequence from pre-tRNA to produce the mature 5'-terminus. The protein is RNA-free ribonuclease P of Methanococcus maripaludis (strain C6 / ATCC BAA-1332).